Consider the following 899-residue polypeptide: Valine--tRNA ligase (899 aa).

The 'HIGH' region signature appears at 58-68; the sequence is PNVTGVLHIGH. Positions 544–548 match the 'KMSKS' region motif; the sequence is KMSKS. Lysine 547 is an ATP binding site. The stretch at 836–898 forms a coiled coil; that stretch reads GTRLHNQRQK…NAELIALGLQ (63 aa).

This sequence belongs to the class-I aminoacyl-tRNA synthetase family. ValS type 1 subfamily. As to quaternary structure, monomer.

Its subcellular location is the cytoplasm. The catalysed reaction is tRNA(Val) + L-valine + ATP = L-valyl-tRNA(Val) + AMP + diphosphate. Functionally, catalyzes the attachment of valine to tRNA(Val). As ValRS can inadvertently accommodate and process structurally similar amino acids such as threonine, to avoid such errors, it has a 'posttransfer' editing activity that hydrolyzes mischarged Thr-tRNA(Val) in a tRNA-dependent manner. The sequence is that of Valine--tRNA ligase from Helicobacter hepaticus (strain ATCC 51449 / 3B1).